The chain runs to 407 residues: Zinc finger protein 552 (407 aa).

Positions 14 to 90 (VTFEDVAVKF…PMAGVSPKKA (77 aa)) constitute a KRAB domain. Residues 91 to 113 (HPCEMCGPILGDILHVADHQGTH) form a C2H2-type 1 zinc finger. Residues 119-141 (HRCEAWGNKLYDSGNFHQHQNEH) form a C2H2-type 2; degenerate zinc finger. Glycyl lysine isopeptide (Lys-Gly) (interchain with G-Cter in SUMO2) cross-links involve residues K176 and K198. A C2H2-type 3; degenerate zinc finger spans residues 212 to 234 (YSCGGCMKHFSTKDILSQHERLL). The C2H2-type 4; degenerate zinc-finger motif lies at 244–262 (ECGKSSSKYDSFSNHQGVH). Residues K251 and K266 each participate in a glycyl lysine isopeptide (Lys-Gly) (interchain with G-Cter in SUMO2) cross-link. 5 C2H2-type zinc fingers span residues 268–290 (YTCG…QRIH), 296–318 (YECE…QRVH), 324–346 (YECS…KRVH), 352–374 (YECS…RRVH), and 380–402 (YGCS…QRVH). Residue K308 forms a Glycyl lysine isopeptide (Lys-Gly) (interchain with G-Cter in SUMO2) linkage.

Belongs to the krueppel C2H2-type zinc-finger protein family.

The protein localises to the nucleus. May be involved in transcriptional regulation. This Homo sapiens (Human) protein is Zinc finger protein 552 (ZNF552).